A 255-amino-acid chain; its full sequence is 5-oxoprolinase subunit A 1 (255 aa).

This sequence belongs to the LamB/PxpA family. Forms a complex composed of PxpA, PxpB and PxpC.

The enzyme catalyses 5-oxo-L-proline + ATP + 2 H2O = L-glutamate + ADP + phosphate + H(+). Its function is as follows. Catalyzes the cleavage of 5-oxoproline to form L-glutamate coupled to the hydrolysis of ATP to ADP and inorganic phosphate. This is 5-oxoprolinase subunit A 1 from Bradyrhizobium diazoefficiens (strain JCM 10833 / BCRC 13528 / IAM 13628 / NBRC 14792 / USDA 110).